The following is a 381-amino-acid chain: ATP-dependent (S)-NAD(P)H-hydrate dehydratase (381 aa).

A YjeF C-terminal domain is found at 84–376 (AEAVVRRITP…EFLGKSLEDI (293 aa)). (6S)-NADPHX-binding positions include G197 and 250 to 256 (NVYEYKR). Residues 290–294 (KGKAD) and 309–318 (GSPRRCGGQG) each bind ATP. D319 provides a ligand contact to (6S)-NADPHX.

It belongs to the NnrD/CARKD family. Requires Mg(2+) as cofactor.

It carries out the reaction (6S)-NADHX + ATP = ADP + phosphate + NADH + H(+). The catalysed reaction is (6S)-NADPHX + ATP = ADP + phosphate + NADPH + H(+). In terms of biological role, catalyzes the dehydration of the S-form of NAD(P)HX at the expense of ATP, which is converted to ADP. Together with NAD(P)HX epimerase, which catalyzes the epimerization of the S- and R-forms, the enzyme allows the repair of both epimers of NAD(P)HX, a damaged form of NAD(P)H that is a result of enzymatic or heat-dependent hydration. The protein is ATP-dependent (S)-NAD(P)H-hydrate dehydratase of Sorghum bicolor (Sorghum).